We begin with the raw amino-acid sequence, 393 residues long: Elongation factor Tu (393 aa).

The region spanning 10-203 is the tr-type G domain; sequence KPHVNIGTIG…AVDSYIPQPV (194 aa). Positions 19–26 are G1; that stretch reads GHVDHGKT. 19 to 26 contributes to the GTP binding site; sequence GHVDHGKT. Thr26 lines the Mg(2+) pocket. The tract at residues 60-64 is G2; it reads GITIS. The G3 stretch occupies residues 81–84; the sequence is DCPG. Residues 81-85 and 136-139 contribute to the GTP site; these read DCPGH and NKVD. The segment at 136–139 is G4; that stretch reads NKVD. The G5 stretch occupies residues 173-175; it reads SAL.

This sequence belongs to the TRAFAC class translation factor GTPase superfamily. Classic translation factor GTPase family. EF-Tu/EF-1A subfamily. In terms of assembly, monomer.

It is found in the cytoplasm. The catalysed reaction is GTP + H2O = GDP + phosphate + H(+). Its function is as follows. GTP hydrolase that promotes the GTP-dependent binding of aminoacyl-tRNA to the A-site of ribosomes during protein biosynthesis. In Chlorobaculum tepidum (strain ATCC 49652 / DSM 12025 / NBRC 103806 / TLS) (Chlorobium tepidum), this protein is Elongation factor Tu.